The sequence spans 119 residues: MARFVVVALLVLLSLSGLEAVQRAPKIQVYSRHPAENGKPNFLNCYVSGFHPSDIEVDLLKNGKKIEKVEHSDLSFSKDWTFYLLYYTEFTPNEKDEYACRVSHVTFSTPKTVKWGRNI.

Residues 1–20 (MARFVVVALLVLLSLSGLEA) form the signal peptide. Residues 25–114 (PKIQVYSRHP…VTFSTPKTVK (90 aa)) form the Ig-like C1-type domain. The cysteines at positions 45 and 100 are disulfide-linked.

This sequence belongs to the beta-2-microglobulin family. Heterodimer of an alpha chain and a beta chain. Beta-2-microglobulin is the beta-chain of major histocompatibility complex class I molecules.

The protein resides in the secreted. Functionally, component of the class I major histocompatibility complex (MHC). Involved in the presentation of peptide antigens to the immune system. The sequence is that of Beta-2-microglobulin (B2M) from Callimico goeldii (Goeldi's marmoset).